Reading from the N-terminus, the 581-residue chain is MSGTDLVSELSARFGDAVLGEQITRERFPTVWIRPEASAAVHRFLKHEVDRPFRMLVDLWAIDETARKHREGQPPSGITIASHLMSHERNADIRLKIALDAEYPSTKSIAGVFPNAAWYEREAYDMFGVEFELQPHSQRILLPPGWEGHPMRKTQPGRATERPLFNMTAALFDAKEHALAADPEKFGLPTHRDGVELMILNYGPHSMATHGVFRIVLALDGEEIVAARPDIGFHHRGAEKMAERQTWHSFLPYTDRVDYLGGVMGEMPYLQAVEKACGITVPDRALMVRVMLSEIFRIMNHLLFYGTMAQDTGAMSPVFYMFVDRERAYRVIESITGARMHPGFFRIGGLSMDLPQGWDGLVREFLDWMPSRLDDYEGMVLRNEIFRARTKGVGAYDTAMALDWGVTGPGLRATGYAWDVRKARPYAGFENFDFEIPVGVNGDCFDRTVVRVEEIRQSLKIIRQCVDNMPSGPIKADHPLTTPPPRERMLHDIETMIHHFVGASWGPVLPAGEYTGQVETVRGLTQFALISDGEPSSYRTRIRTPSFAHLQMISAVAPGMMVADLVAFLGSIDYVMSDVDR.

Positions 1–172 (MSGTDLVSEL…PLFNMTAALF (172 aa)) are NADH dehydrogenase I subunit C. The NADH dehydrogenase I subunit D stretch occupies residues 196-581 (ELMILNYGPH…IDYVMSDVDR (386 aa)).

The protein in the N-terminal section; belongs to the complex I 30 kDa subunit family. This sequence in the C-terminal section; belongs to the complex I 49 kDa subunit family. NDH-1 is composed of 13 different subunits. Subunits NuoB, CD, E, F, and G constitute the peripheral sector of the complex.

The protein localises to the cell inner membrane. It catalyses the reaction a quinone + NADH + 5 H(+)(in) = a quinol + NAD(+) + 4 H(+)(out). Its function is as follows. NDH-1 shuttles electrons from NADH, via FMN and iron-sulfur (Fe-S) centers, to quinones in the respiratory chain. The immediate electron acceptor for the enzyme in this species is believed to be ubiquinone. Couples the redox reaction to proton translocation (for every two electrons transferred, four hydrogen ions are translocated across the cytoplasmic membrane), and thus conserves the redox energy in a proton gradient. The polypeptide is NADH-quinone oxidoreductase subunit C/D (Rhodopseudomonas palustris (strain BisB5)).